A 140-amino-acid polypeptide reads, in one-letter code: MSKRGRGGSAGGKFRISLGLPVGAVINCADNTGAKNLYVIAVHGIRGRLNRLPAAGVGDMFVATVKKGKPELRKKVMPAVVIRQRKPFRRRDGVFLYFEDNAGVIVNNKGEMKGSAITGPVAKECADLWPRIASNAGSIA.

It belongs to the universal ribosomal protein uL14 family.

This is Large ribosomal subunit protein uL14 (RpL23-A) from Aedes aegypti (Yellowfever mosquito).